A 338-amino-acid polypeptide reads, in one-letter code: Aspartate carbamoyltransferase catalytic subunit (338 aa).

Carbamoyl phosphate-binding residues include arginine 72 and threonine 73. Residue lysine 100 coordinates L-aspartate. Residues arginine 122, histidine 152, and glutamine 155 each coordinate carbamoyl phosphate. L-aspartate-binding residues include arginine 186 and arginine 243. Glycine 284 and proline 285 together coordinate carbamoyl phosphate.

Belongs to the aspartate/ornithine carbamoyltransferase superfamily. ATCase family. As to quaternary structure, heterododecamer (2C3:3R2) of six catalytic PyrB chains organized as two trimers (C3), and six regulatory PyrI chains organized as three dimers (R2).

It carries out the reaction carbamoyl phosphate + L-aspartate = N-carbamoyl-L-aspartate + phosphate + H(+). It participates in pyrimidine metabolism; UMP biosynthesis via de novo pathway; (S)-dihydroorotate from bicarbonate: step 2/3. Catalyzes the condensation of carbamoyl phosphate and aspartate to form carbamoyl aspartate and inorganic phosphate, the committed step in the de novo pyrimidine nucleotide biosynthesis pathway. This Acinetobacter baumannii (strain ACICU) protein is Aspartate carbamoyltransferase catalytic subunit.